We begin with the raw amino-acid sequence, 248 residues long: Pyridoxine 5'-phosphate synthase (248 aa).

N12 serves as a coordination point for 3-amino-2-oxopropyl phosphate. 14-15 (DH) lines the 1-deoxy-D-xylulose 5-phosphate pocket. 3-amino-2-oxopropyl phosphate is bound at residue R23. H48 functions as the Proton acceptor in the catalytic mechanism. 1-deoxy-D-xylulose 5-phosphate-binding residues include R50 and H55. E75 acts as the Proton acceptor in catalysis. A 1-deoxy-D-xylulose 5-phosphate-binding site is contributed by T105. H196 functions as the Proton donor in the catalytic mechanism. Residues G197 and 218–219 (GH) contribute to the 3-amino-2-oxopropyl phosphate site.

The protein belongs to the PNP synthase family. In terms of assembly, homooctamer; tetramer of dimers.

The protein resides in the cytoplasm. It carries out the reaction 3-amino-2-oxopropyl phosphate + 1-deoxy-D-xylulose 5-phosphate = pyridoxine 5'-phosphate + phosphate + 2 H2O + H(+). It functions in the pathway cofactor biosynthesis; pyridoxine 5'-phosphate biosynthesis; pyridoxine 5'-phosphate from D-erythrose 4-phosphate: step 5/5. Its function is as follows. Catalyzes the complicated ring closure reaction between the two acyclic compounds 1-deoxy-D-xylulose-5-phosphate (DXP) and 3-amino-2-oxopropyl phosphate (1-amino-acetone-3-phosphate or AAP) to form pyridoxine 5'-phosphate (PNP) and inorganic phosphate. The protein is Pyridoxine 5'-phosphate synthase of Stutzerimonas stutzeri (strain A1501) (Pseudomonas stutzeri).